The chain runs to 273 residues: Putative phosphoenolpyruvate synthase regulatory protein (273 aa).

153–160 (GVSRCGKT) is an ADP binding site.

The protein belongs to the pyruvate, phosphate/water dikinase regulatory protein family. PSRP subfamily.

The enzyme catalyses [pyruvate, water dikinase] + ADP = [pyruvate, water dikinase]-phosphate + AMP + H(+). It carries out the reaction [pyruvate, water dikinase]-phosphate + phosphate + H(+) = [pyruvate, water dikinase] + diphosphate. Its function is as follows. Bifunctional serine/threonine kinase and phosphorylase involved in the regulation of the phosphoenolpyruvate synthase (PEPS) by catalyzing its phosphorylation/dephosphorylation. The polypeptide is Putative phosphoenolpyruvate synthase regulatory protein (Yersinia enterocolitica serotype O:8 / biotype 1B (strain NCTC 13174 / 8081)).